The chain runs to 201 residues: MAATALLEAGLARVLFYPTLLYTLFRGKVPGRAHRDWYHRIDPTVLLGALPLRSLTRQLVQDENVRGVITMNEEYETRFLCNSSQEWKRLGVEQLRLSTVDMTGIPTLDNLQKGVQFALKYQSLGQCVYVHCKAGRSRSATMVAAYLIQVHKWSPEEAVRAIAKIRSYIHIRPGQLDVLKEFHKQITARATKDGTFVISKT.

Residues Met-1 to Gly-27 constitute a mitochondrion transit peptide. One can recognise a Tyrosine-protein phosphatase domain in the interval Trp-37–Ala-188. The Phosphocysteine intermediate role is filled by Cys-132.

It belongs to the protein-tyrosine phosphatase family. Non-receptor class dual specificity subfamily. In terms of assembly, interacts with STYXL1; the interaction inhibits PTPMT1 catalytic activity.

Its subcellular location is the mitochondrion inner membrane. The catalysed reaction is a 1,2-diacyl-sn-glycero-3-phospho-(1'-sn-glycero-3'-phosphate) + H2O = a 1,2-diacyl-sn-glycero-3-phospho-(1'-sn-glycerol) + phosphate. It catalyses the reaction O-phospho-L-tyrosyl-[protein] + H2O = L-tyrosyl-[protein] + phosphate. It carries out the reaction O-phospho-L-seryl-[protein] + H2O = L-seryl-[protein] + phosphate. The enzyme catalyses O-phospho-L-threonyl-[protein] + H2O = L-threonyl-[protein] + phosphate. The catalysed reaction is 1,2-di-(9Z-octadecenoyl)-sn-glycero-3-phospho-(1'-sn-glycerol-3'-phosphate) + H2O = 1,2-di-(9Z-octadecenoyl)-sn-glycero-3-phospho-(1'-sn-glycerol) + phosphate. It catalyses the reaction 1,2-dioctanoyl-sn-glycero-3-phospho-(1D-myo-inositol-5-phosphate) + H2O = 1,2-dioctanoyl-sn-glycero-3-phospho-(1D-myo-inositol) + phosphate. It carries out the reaction a 1-acyl-2-hexanoyl-sn-glycero-3-phospho-(1D-myo-inositol-5-phosphate) + H2O = a 1-acyl-2-hexanoyl-sn-glycero-3-phospho-(1D-myo-inositol) + phosphate. The enzyme catalyses 1,2-dibutyryl-sn-glycero-3-phospho-(1D-myo-inositol-5-phosphate) + H2O = 1,2-dibutyryl-sn-glycero-3-phospho-(1D-myo-inositol) + phosphate. It functions in the pathway phospholipid metabolism; phosphatidylglycerol biosynthesis; phosphatidylglycerol from CDP-diacylglycerol: step 2/2. Lipid phosphatase which dephosphorylates phosphatidylglycerophosphate (PGP) to phosphatidylglycerol (PG). PGP is an essential intermediate in the biosynthetic pathway of cardiolipin, a mitochondrial-specific phospholipid regulating the membrane integrity and activities of the organelle. Has also been shown to display phosphatase activity toward phosphoprotein substrates, specifically mediates dephosphorylation of mitochondrial proteins, thereby playing an essential role in ATP production. Has probably a preference for proteins phosphorylated on Ser and/or Thr residues compared to proteins phosphorylated on Tyr residues. Probably involved in regulation of insulin secretion in pancreatic beta cells. May prevent intrinsic apoptosis, probably by regulating mitochondrial membrane integrity. This chain is Phosphatidylglycerophosphatase and protein-tyrosine phosphatase 1, found in Homo sapiens (Human).